The chain runs to 230 residues: Protein UPS2, mitochondrial (230 aa).

A PRELI/MSF1 domain is found at 1-175; that stretch reads MKLFQNSYDF…VLQVFSENWE (175 aa).

It belongs to the slowmo family. As to quaternary structure, interacts with MDM35.

The protein resides in the mitochondrion inner membrane. It localises to the mitochondrion intermembrane space. Required for mitochondrial cristae morphogenesis and MGM1-processing. Controls the stability of mitochondrial phosphatidylethanolamine (PE). With UPS1, controls the level of cardiolipin in mitochondria. Cardiolipin is a unique phospholipid with four fatty acid chains and is present mainly in the mitochondrial inner membrane where it stabilizes the electron transport chain supercomplex between complexes III and IV through direct interaction of their subunits. This is Protein UPS2, mitochondrial (UPS2) from Saccharomyces cerevisiae (strain ATCC 204508 / S288c) (Baker's yeast).